Consider the following 316-residue polypeptide: L-lactate dehydrogenase 1 (316 aa).

NAD(+) is bound by residues Val17, Asp38, Lys43, and Tyr69. Substrate is bound by residues Arg92 and 124–127 (NPVD). NAD(+)-binding positions include 122-124 (VSN) and Thr147. 152–155 (DTSR) is a substrate binding site. The active-site Proton acceptor is His179. Residue Thr234 coordinates substrate.

It belongs to the LDH/MDH superfamily. LDH family. In terms of assembly, homotetramer.

The protein localises to the cytoplasm. It carries out the reaction (S)-lactate + NAD(+) = pyruvate + NADH + H(+). Its pathway is fermentation; pyruvate fermentation to lactate; (S)-lactate from pyruvate: step 1/1. In terms of biological role, catalyzes the conversion of lactate to pyruvate. This Bifidobacterium longum subsp. longum (strain ATCC 15707 / DSM 20219 / JCM 1217 / NCTC 11818 / E194b) protein is L-lactate dehydrogenase 1.